A 573-amino-acid polypeptide reads, in one-letter code: Sulfite reductase [NADPH] hemoprotein beta-component (573 aa).

[4Fe-4S] cluster-binding residues include Cys-438, Cys-444, Cys-483, and Cys-487. A siroheme-binding site is contributed by Cys-487.

The protein belongs to the nitrite and sulfite reductase 4Fe-4S domain family. In terms of assembly, alpha(8)-beta(8). The alpha component is a flavoprotein, the beta component is a hemoprotein. It depends on siroheme as a cofactor. Requires [4Fe-4S] cluster as cofactor.

It carries out the reaction hydrogen sulfide + 3 NADP(+) + 3 H2O = sulfite + 3 NADPH + 4 H(+). The protein operates within sulfur metabolism; hydrogen sulfide biosynthesis; hydrogen sulfide from sulfite (NADPH route): step 1/1. In terms of biological role, component of the sulfite reductase complex that catalyzes the 6-electron reduction of sulfite to sulfide. This is one of several activities required for the biosynthesis of L-cysteine from sulfate. This Staphylococcus haemolyticus (strain JCSC1435) protein is Sulfite reductase [NADPH] hemoprotein beta-component.